The primary structure comprises 367 residues: Peroxidase 1 (367 aa).

An N-terminal signal peptide occupies residues 1–33 (MAKESKLTAGVAAALTVVAACALCLLLPATARA). The residue at position 34 (Q34) is a Pyrrolidone carboxylic acid. 4 disulfides stabilise this stretch: C44/C125, C77/C82, C131/C335, and C209/C244. H75 acts as the Proton acceptor in catalysis. Ca(2+) is bound by residues D76, V79, G81, D83, and S85. A glycan (N-linked (GlcNAc...) asparagine) is linked at N164. Position 172 (P172) interacts with substrate. H202 serves as a coordination point for heme b. T203 is a Ca(2+) binding site. N-linked (GlcNAc...) asparagine glycans are attached at residues N218 and N247. Positions 259, 262, and 267 each coordinate Ca(2+). Residue N303 is glycosylated (N-linked (GlcNAc...) asparagine).

Belongs to the peroxidase family. Classical plant (class III) peroxidase subfamily. It depends on heme b as a cofactor. Requires Ca(2+) as cofactor. Expressed in the root tip meristems.

It localises to the secreted. Its subcellular location is the vacuole. The catalysed reaction is 2 a phenolic donor + H2O2 = 2 a phenolic radical donor + 2 H2O. Functionally, removal of H(2)O(2), oxidation of toxic reductants, biosynthesis and degradation of lignin, suberization, auxin catabolism, response to environmental stresses such as wounding, pathogen attack and oxidative stress. These functions might be dependent on each isozyme/isoform in each plant tissue. The chain is Peroxidase 1 (PER1) from Zea mays (Maize).